The sequence spans 469 residues: GTPase Der (469 aa).

EngA-type G domains follow at residues P3–V167 and P175–M348. Residues G9–S16, D56–F60, N119–E122, G181–S188, D228–V232, and N293–D296 each bind GTP. In terms of domain architecture, KH-like spans S349–E433. The tract at residues Y429–K469 is disordered.

The protein belongs to the TRAFAC class TrmE-Era-EngA-EngB-Septin-like GTPase superfamily. EngA (Der) GTPase family. In terms of assembly, associates with the 50S ribosomal subunit.

In terms of biological role, GTPase that plays an essential role in the late steps of ribosome biogenesis. The chain is GTPase Der from Chromobacterium violaceum (strain ATCC 12472 / DSM 30191 / JCM 1249 / CCUG 213 / NBRC 12614 / NCIMB 9131 / NCTC 9757 / MK).